Here is a 462-residue protein sequence, read N- to C-terminus: Signal recognition particle protein (462 aa).

GTP-binding positions include 107 to 114 (GLQGAGKT), 190 to 194 (DTAGR), and 248 to 251 (TKVD).

This sequence belongs to the GTP-binding SRP family. SRP54 subfamily. Part of the signal recognition particle protein translocation system, which is composed of SRP and FtsY. SRP is a ribonucleoprotein composed of Ffh and a 4.5S RNA molecule.

The protein resides in the cytoplasm. The catalysed reaction is GTP + H2O = GDP + phosphate + H(+). Its function is as follows. Involved in targeting and insertion of nascent membrane proteins into the cytoplasmic membrane. Binds to the hydrophobic signal sequence of the ribosome-nascent chain (RNC) as it emerges from the ribosomes. The SRP-RNC complex is then targeted to the cytoplasmic membrane where it interacts with the SRP receptor FtsY. Interaction with FtsY leads to the transfer of the RNC complex to the Sec translocase for insertion into the membrane, the hydrolysis of GTP by both Ffh and FtsY, and the dissociation of the SRP-FtsY complex into the individual components. The polypeptide is Signal recognition particle protein (Haemophilus influenzae (strain ATCC 51907 / DSM 11121 / KW20 / Rd)).